Here is a 300-residue protein sequence, read N- to C-terminus: tRNA pseudouridine synthase B (300 aa).

D47 (nucleophile) is an active-site residue.

Belongs to the pseudouridine synthase TruB family. Type 1 subfamily.

The enzyme catalyses uridine(55) in tRNA = pseudouridine(55) in tRNA. In terms of biological role, responsible for synthesis of pseudouridine from uracil-55 in the psi GC loop of transfer RNAs. In Azoarcus sp. (strain BH72), this protein is tRNA pseudouridine synthase B.